A 781-amino-acid polypeptide reads, in one-letter code: Lon protease (781 aa).

Residues 16–214 (ANVLVTRGIV…KILSFTIDER (199 aa)) enclose the Lon N-terminal domain. ATP is bound at residue 365-372 (GPPGVGKT). Positions 601 to 781 (EYMPGVVNGM…YDDVYNRLFK (181 aa)) constitute a Lon proteolytic domain. Active-site residues include S688 and K731.

Belongs to the peptidase S16 family. As to quaternary structure, homohexamer. Organized in a ring with a central cavity.

The protein localises to the cytoplasm. The catalysed reaction is Hydrolysis of proteins in presence of ATP.. Functionally, ATP-dependent serine protease that mediates the selective degradation of mutant and abnormal proteins as well as certain short-lived regulatory proteins. Required for cellular homeostasis and for survival from DNA damage and developmental changes induced by stress. Degrades polypeptides processively to yield small peptide fragments that are 5 to 10 amino acids long. Binds to DNA in a double-stranded, site-specific manner. The polypeptide is Lon protease (Malacoplasma penetrans (strain HF-2) (Mycoplasma penetrans)).